Reading from the N-terminus, the 709-residue chain is Polyribonucleotide nucleotidyltransferase (709 aa).

Mg(2+) is bound by residues D487 and D493. A KH domain is found at 554–613 (PRIHTMKISSDKIKDVIGKGGAVIRALCEETGTTIEIEDDGTIKIAATEGAAAKEAIRRI). The 69-residue stretch at 623-691 (GKIYPGKVMR…RQGRIRLSIK (69 aa)) folds into the S1 motif domain.

Belongs to the polyribonucleotide nucleotidyltransferase family. Component of the RNA degradosome, which is a multiprotein complex involved in RNA processing and mRNA degradation. Requires Mg(2+) as cofactor.

It is found in the cytoplasm. It catalyses the reaction RNA(n+1) + phosphate = RNA(n) + a ribonucleoside 5'-diphosphate. Involved in mRNA degradation. Catalyzes the phosphorolysis of single-stranded polyribonucleotides processively in the 3'- to 5'-direction. This chain is Polyribonucleotide nucleotidyltransferase, found in Aliivibrio salmonicida (strain LFI1238) (Vibrio salmonicida (strain LFI1238)).